Reading from the N-terminus, the 111-residue chain is Ciprofloxacin tolerance protein (111 aa).

The Periplasmic segment spans residues 1–5 (MVTAN). A helical membrane pass occupies residues 6 to 26 (FAAIAGLSLIAVALVAVFFSP). At 27–30 (YRRW) the chain is on the cytoplasmic side. A helical membrane pass occupies residues 31 to 51 (LGFMLAGMFFWGLLEVVRFGV). The Periplasmic segment spans residues 52–58 (QVTFEMP). Residues 59-79 (VTYSYLTALSLAMVMVTFVLL) form a helical membrane-spanning segment. Over 80-111 (REDKQAQKALANRQYIEHTPVYEDDQQQCSSR) the chain is Cytoplasmic.

The protein localises to the cell inner membrane. Its function is as follows. May play a role in cellular filamentation, especially in response to ciprofloxacin. Increased expression confers tolerance to the antibiotic ciprofloxacin. This chain is Ciprofloxacin tolerance protein, found in Acinetobacter baumannii.